We begin with the raw amino-acid sequence, 122 residues long: Large ribosomal subunit protein uL18 (122 aa).

The span at M1–R19 shows a compositional bias: basic residues. Residues M1–V21 form a disordered region.

This sequence belongs to the universal ribosomal protein uL18 family. In terms of assembly, part of the 50S ribosomal subunit; part of the 5S rRNA/L5/L18/L25 subcomplex. Contacts the 5S and 23S rRNAs.

Its function is as follows. This is one of the proteins that bind and probably mediate the attachment of the 5S RNA into the large ribosomal subunit, where it forms part of the central protuberance. The sequence is that of Large ribosomal subunit protein uL18 from Prochlorococcus marinus (strain MIT 9312).